Here is a 170-residue protein sequence, read N- to C-terminus: Ribosome maturation factor RimM (170 aa).

The region spanning Pro-98–Phe-170 is the PRC barrel domain.

Belongs to the RimM family. As to quaternary structure, binds ribosomal protein uS19.

It is found in the cytoplasm. Its function is as follows. An accessory protein needed during the final step in the assembly of 30S ribosomal subunit, possibly for assembly of the head region. Essential for efficient processing of 16S rRNA. May be needed both before and after RbfA during the maturation of 16S rRNA. It has affinity for free ribosomal 30S subunits but not for 70S ribosomes. The chain is Ribosome maturation factor RimM from Xanthomonas oryzae pv. oryzae (strain MAFF 311018).